A 226-amino-acid chain; its full sequence is Phosphoglycolate phosphatase (226 aa).

The active-site Nucleophile is the D10. Mg(2+)-binding residues include D10, D12, and D175.

It belongs to the HAD-like hydrolase superfamily. CbbY/CbbZ/Gph/YieH family. It depends on Mg(2+) as a cofactor.

The catalysed reaction is 2-phosphoglycolate + H2O = glycolate + phosphate. The protein operates within organic acid metabolism; glycolate biosynthesis; glycolate from 2-phosphoglycolate: step 1/1. Its function is as follows. Specifically catalyzes the dephosphorylation of 2-phosphoglycolate. Is involved in the dissimilation of the intracellular 2-phosphoglycolate formed during the DNA repair of 3'-phosphoglycolate ends, a major class of DNA lesions induced by oxidative stress. This Vibrio cholerae serotype O1 (strain ATCC 39315 / El Tor Inaba N16961) protein is Phosphoglycolate phosphatase.